A 110-amino-acid polypeptide reads, in one-letter code: UPF0122 protein lin1916 (110 aa).

This sequence belongs to the UPF0122 family.

Its function is as follows. Might take part in the signal recognition particle (SRP) pathway. This is inferred from the conservation of its genetic proximity to ftsY/ffh. May be a regulatory protein. In Listeria innocua serovar 6a (strain ATCC BAA-680 / CLIP 11262), this protein is UPF0122 protein lin1916.